A 335-amino-acid chain; its full sequence is Succinylglutamate desuccinylase (335 aa).

Residues His-59, Glu-62, and His-151 each coordinate Zn(2+). The active site involves Glu-215.

It belongs to the AspA/AstE family. Succinylglutamate desuccinylase subfamily. It depends on Zn(2+) as a cofactor.

It catalyses the reaction N-succinyl-L-glutamate + H2O = L-glutamate + succinate. The protein operates within amino-acid degradation; L-arginine degradation via AST pathway; L-glutamate and succinate from L-arginine: step 5/5. In terms of biological role, transforms N(2)-succinylglutamate into succinate and glutamate. In Pseudomonas putida (strain GB-1), this protein is Succinylglutamate desuccinylase.